We begin with the raw amino-acid sequence, 447 residues long: Naphthalene 1,2-dioxygenase system, large oxygenase component (447 aa).

Residues 37–135 (WLFLTHDSLI…IKKKCLGLKE (99 aa)) enclose the Rieske domain. C79, H81, C99, and H102 together coordinate [2Fe-2S] cluster. Residues H206, H211, and D360 each contribute to the Fe cation site.

This sequence belongs to the bacterial ring-hydroxylating dioxygenase alpha subunit family. The naphthalene dioxygenase (NDO) multicomponent enzyme system is composed of an electron transfer component and a dioxygenase component (iron sulfur protein (ISP)). The electron transfer component is composed of a ferredoxin reductase (NagAa) and a ferredoxin (NagAb), and the dioxygenase component is formed by a large alpha subunit (NagAc) and a small beta subunit (NagAd). [2Fe-2S] cluster is required as a cofactor. Requires Fe(2+) as cofactor.

It carries out the reaction naphthalene + NADH + O2 + H(+) = (1R,2S)-1,2-dihydronaphthalene-1,2-diol + NAD(+). It functions in the pathway aromatic compound metabolism; naphthalene degradation. Functionally, component of the naphthalene dioxygenase (NDO) multicomponent enzyme system which catalyzes the incorporation of both atoms of molecular oxygen into naphthalene to form cis-(1R,2S)-dihydroxy-1,2-dihydronaphthalene. The alpha subunit has a catalytic role in the holoenzyme. Also able to use styrene as substrate. This Ralstonia sp protein is Naphthalene 1,2-dioxygenase system, large oxygenase component.